The sequence spans 416 residues: Tyrosine--tRNA ligase (416 aa).

Residue Tyr40 coordinates L-tyrosine. A 'HIGH' region motif is present at residues 45 to 54; the sequence is ATAKSLHVGS. The L-tyrosine site is built by Tyr177 and Gln181. A 'KMSKS' region motif is present at residues 237 to 241; it reads KMGKS. Lys240 contacts ATP. The S4 RNA-binding domain occupies 351-415; it reads ISIVQLIVKS…GKKRHAMVQL (65 aa).

This sequence belongs to the class-I aminoacyl-tRNA synthetase family. TyrS type 1 subfamily. Homodimer.

It is found in the cytoplasm. The catalysed reaction is tRNA(Tyr) + L-tyrosine + ATP = L-tyrosyl-tRNA(Tyr) + AMP + diphosphate + H(+). Catalyzes the attachment of tyrosine to tRNA(Tyr) in a two-step reaction: tyrosine is first activated by ATP to form Tyr-AMP and then transferred to the acceptor end of tRNA(Tyr). This is Tyrosine--tRNA ligase from Roseobacter denitrificans (strain ATCC 33942 / OCh 114) (Erythrobacter sp. (strain OCh 114)).